The chain runs to 390 residues: Alkanesulfonate monooxygenase (390 aa).

It belongs to the SsuD family.

It carries out the reaction an alkanesulfonate + FMNH2 + O2 = an aldehyde + FMN + sulfite + H2O + 2 H(+). In terms of biological role, catalyzes the desulfonation of aliphatic sulfonates. In Cupriavidus taiwanensis (strain DSM 17343 / BCRC 17206 / CCUG 44338 / CIP 107171 / LMG 19424 / R1) (Ralstonia taiwanensis (strain LMG 19424)), this protein is Alkanesulfonate monooxygenase.